Here is a 484-residue protein sequence, read N- to C-terminus: Putative cysteine ligase BshC (484 aa).

Residues 372-435 adopt a coiled-coil conformation; that stretch reads RAFRDRVEGL…AARDEVLARH (64 aa).

Belongs to the BshC family.

The sequence is that of Putative cysteine ligase BshC from Thermus thermophilus (strain ATCC 27634 / DSM 579 / HB8).